Here is a 232-residue protein sequence, read N- to C-terminus: Flagellar L-ring protein (232 aa).

The N-terminal stretch at 1-15 (MKKVLFYVLPFAFFG) is a signal peptide. Cys-16 carries the N-palmitoyl cysteine lipid modification. The S-diacylglycerol cysteine moiety is linked to residue Cys-16.

It belongs to the FlgH family. In terms of assembly, the basal body constitutes a major portion of the flagellar organelle and consists of four rings (L,P,S, and M) mounted on a central rod.

The protein localises to the cell outer membrane. It localises to the bacterial flagellum basal body. Functionally, assembles around the rod to form the L-ring and probably protects the motor/basal body from shearing forces during rotation. The polypeptide is Flagellar L-ring protein (Campylobacter jejuni subsp. doylei (strain ATCC BAA-1458 / RM4099 / 269.97)).